We begin with the raw amino-acid sequence, 515 residues long: Leucine-rich repeat transmembrane neuronal protein 2 (515 aa).

Residues 1–33 (MGLHFKWPLGAPMLAAIYAMSVVLKMLPALGMA) form the signal peptide. Residues 34-421 (CPPKCRCEKL…EPDNAIFTQR (388 aa)) are Extracellular-facing. A glycan (N-linked (GlcNAc...) asparagine) is linked at Asn57. LRR repeat units lie at residues 61 to 83 (KGSL…QFAS), 84 to 107 (FSQL…AFQG), 109 to 131 (YKLK…TFTQ), 132 to 155 (LINL…LFYG), 156 to 179 (LRKL…LFWD), 181 to 203 (RSLE…GFAG), 205 to 227 (IKLR…HFLR), 229 to 251 (SSLH…MEWT), 252 to 275 (WSTL…VFET), and 276 to 299 (MPNL…ILSS). A glycan (N-linked (GlcNAc...) asparagine) is linked at Asn126. The N-linked (GlcNAc...) asparagine glycan is linked to Asn243. N-linked (GlcNAc...) asparagine glycosylation is present at Asn362. Residues 422–442 (VITGTMALLFSFFFIIFIVFI) form a helical membrane-spanning segment. Over 443 to 515 (SRKCCPPTLR…QQLPYKECEV (73 aa)) the chain is Cytoplasmic. The short motif at 512–515 (ECEV) is the Involved in DLG4-binding element.

Belongs to the LRRTM family. Interacts with DLG4. Interacts with neurexin NRXN1; interaction is mediated by heparan sulfate glycan modification on neurexin. As to expression, expressed in neuronal tissues. Widely distributed in neuropil regions in discrete puncta throughout the brain (at protein level). Detected in cortex, thalamus, striatum, olfactory bulb, cerebellum and all hippocampal subfields (at protein level). More abundant in deep than in superficial layers of neocortex (at protein level).

Its subcellular location is the cell membrane. The protein localises to the postsynaptic cell membrane. Functionally, involved in the development and maintenance of excitatory synapses in the nervous system. Regulates surface expression of AMPA receptors and instructs the development of functional glutamate release sites. Acts as a ligand for the presynaptic receptors NRXN1-A and NRXN1-B. This is Leucine-rich repeat transmembrane neuronal protein 2 (Lrrtm2) from Rattus norvegicus (Rat).